Reading from the N-terminus, the 1001-residue chain is MKRIFSCSSTQVAVERWNRHDQKLLEAVHRGDVGRVAALASRKSARPTKLDSNGQSPFHLAASKGLTECLTILLANGADINSKNEDGSTALHLATISCQPQCVKVLLQHGANEDAVDAENRSPLHWAASSGCASSVLLLCDHEAFLDVLDNDGRTPLMIASLGGHAAICSQLLQRGARVNVTDKNDKSALILACEKGSAEVAELLLSHGADAGAVDSTGHDALHYALHTQDKALWRHLQQALSRRRRGGQRLVQHPDLASQASPSEPQAGSPPKSSWRAEPEEEQEEKEDEDPCSEEWRWKYEEERRKVVRLEQELVQKTEECKTQAAAYLDLENQIREQAQELGVLLSWEPRASGKQGSSLRPGGDGMEQGCPKDLLAESTQELKKQQQAAATVNPVLAPKKAEDSAPGKIQYEVHGRSQPEEQGPPQSPASETIRKATGQQLTTNGAQTFGPDHADQLPAGQKESSQVLGVEPGGTVAEPVGPAAMNQLLLQLREELAAVWREKDAARGALSRPVMEGALGTPRAEAAAAAWEKMEARLERVLARLEWAKAGLQVKPEVPSQESREGALKAAPGSIKQDEEKEKRVPGAQGEPLGALGGEKALGGLAKGQLEKEMSVLRLSNSNLLEELGELGRERQRLQRELQSLSQRLQREFVPKPQAQVQLQQLRQSVGLLTNELAMEKEATEKLRKLLASQSSGLRGLWDCLPADLVGERSAQSKAAESLEELRACISTLVDRHREAQQVLARLQEENQQLRGSLSPCREPGTSLKAPASPQVAALEQDLGKLEEELRAVQATMSGKSQEIGKLKQLLYQATEEVAELRAREAASLRQHEKTRGSLVAQAQAWGQELKALLEKYNTACREVGRLREAVAEERRRSGDLAAQAAEQERQASEMRGRSEQFEKTAELLKEKMEHLIGACRDKEAKIKELLKKLEQLSEEVLAIRGENARLALQLQDSQKNHEEIISTYRNHLLNAARGYMEHEVYNILLQILSMEEE.

ANK repeat units follow at residues 53–82, 86–115, 119–148, 152–181, 185–214, and 218–247; these read NGQS…DINS, DGST…NEDA, ENRS…FLDV, DGRT…RVNV, NDKS…DAGA, and TGHD…RRRR. Disordered stretches follow at residues 256-296, 352-482, and 559-601; these read PDLA…PCSE, PRAS…VAEP, and PEVP…ALGG. Residues 281-295 are compositionally biased toward acidic residues; it reads PEEEQEEKEDEDPCS. The stretch at 295–344 forms a coiled coil; sequence SEEWRWKYEEERRKVVRLEQELVQKTEECKTQAAAYLDLENQIREQAQEL. A compositionally biased stretch (basic and acidic residues) spans 402–422; the sequence is KKAEDSAPGKIQYEVHGRSQP. The span at 423 to 434 shows a compositional bias: low complexity; sequence EEQGPPQSPASE. The segment covering 440-450 has biased composition (polar residues); the sequence is TGQQLTTNGAQ. Positions 579 to 588 are enriched in basic and acidic residues; the sequence is KQDEEKEKRV. Coiled-coil stretches lie at residues 610–696, 733–810, and 851–968; these read KGQL…LLAS, ISTL…IGKL, and QELK…HEEI. Residues 879–902 form a disordered region; the sequence is RRSGDLAAQAAEQERQASEMRGRS. Residues 890-902 show a composition bias toward basic and acidic residues; it reads EQERQASEMRGRS.

In Homo sapiens (Human), this protein is Ankyrin repeat domain-containing protein 35 (ANKRD35).